We begin with the raw amino-acid sequence, 156 residues long: 17 kDa lipoprotein (156 aa).

The N-terminal stretch at Met-1–Leu-21 is a signal peptide. Cys-22 carries N-palmitoyl cysteine lipidation. A lipid anchor (S-diacylglycerol cysteine) is attached at Cys-22.

Its subcellular location is the cell membrane. In Treponema pallidum (strain Nichols), this protein is 17 kDa lipoprotein (tpp17).